The following is a 692-amino-acid chain: Ribonuclease R (692 aa).

The RNB domain occupies 204-525 (RKDLRDLLCF…IVHRLLFHPL (322 aa)). Residues 563–648 (KKFLDEQPAT…LTQAIEWTLI (86 aa)) form the S1 motif domain. The segment at 651-692 (KERSSSKKKKAKAKSNATQVKKKSSSKKKKAVSKAKKNRGGK) is disordered. The span at 670 to 692 (VKKKSSSKKKKAVSKAKKNRGGK) shows a compositional bias: basic residues.

Belongs to the RNR ribonuclease family. RNase R subfamily.

It is found in the cytoplasm. It carries out the reaction Exonucleolytic cleavage in the 3'- to 5'-direction to yield nucleoside 5'-phosphates.. In terms of biological role, 3'-5' exoribonuclease that releases 5'-nucleoside monophosphates and is involved in maturation of structured RNAs. The protein is Ribonuclease R of Chlamydia muridarum (strain MoPn / Nigg).